Here is a 248-residue protein sequence, read N- to C-terminus: Sperm-specific protein Don juan (248 aa).

Positions 82 to 147 (KEGNQDELEN…EKKTKCAKKD (66 aa)) form a coiled coil. The interval 146–200 (KDPCKKKDPCKKKDPCKKKDPCKKKDPCKKKDPCKKKDPCKKKDPCKKKGGDLKK) is disordered. A run of 8 repeats spans residues 147-152 (DPCKKK), 153-158 (DPCKKK), 159-164 (DPCKKK), 165-170 (DPCKKK), 171-176 (DPCKKK), 177-182 (DPCKKK), 183-188 (DPCKKK), and 189-194 (DPCKKK). Residues 147–194 (DPCKKKDPCKKKDPCKKKDPCKKKDPCKKKDPCKKKDPCKKKDPCKKK) are 8 X 6 AA tandem repeat of D-P-C-K-K-K. A coiled-coil region spans residues 197–244 (DLKKKCKKLAEKEKCKKLAKKEKMKKLQKKCKKMAQKEKCKKMAKKDK).

As to expression, expression limited to post-meiotic male germ cells. Expressed in elongated spermatids during individualization and in finally elongated nuclei of spermatids. After completion of nuclear shaping it is no longer expressed in the sperm heads with the onset of individualization.

The protein localises to the nucleus. The protein resides in the mitochondrion. In terms of biological role, may be involved in the final steps of mitochondrial differentiation within the flagellum. This Drosophila melanogaster (Fruit fly) protein is Sperm-specific protein Don juan (dj).